An 804-amino-acid polypeptide reads, in one-letter code: Lon protease 2 (804 aa).

The region spanning Val-19 to Leu-216 is the Lon N-terminal domain. Position 367-374 (Gly-367–Thr-374) interacts with ATP. A Lon proteolytic domain is found at Thr-603 to Pro-784. Active-site residues include Ser-690 and Lys-733. The disordered stretch occupies residues Leu-782–Val-804.

This sequence belongs to the peptidase S16 family. In terms of assembly, homohexamer. Organized in a ring with a central cavity.

The protein localises to the cytoplasm. It carries out the reaction Hydrolysis of proteins in presence of ATP.. Its function is as follows. ATP-dependent serine protease that mediates the selective degradation of mutant and abnormal proteins as well as certain short-lived regulatory proteins. Required for cellular homeostasis and for survival from DNA damage and developmental changes induced by stress. Degrades polypeptides processively to yield small peptide fragments that are 5 to 10 amino acids long. Binds to DNA in a double-stranded, site-specific manner. This Sorangium cellulosum (strain So ce56) (Polyangium cellulosum (strain So ce56)) protein is Lon protease 2.